Reading from the N-terminus, the 325-residue chain is Heat-inducible transcription repressor HrcA (325 aa).

This sequence belongs to the HrcA family.

Functionally, negative regulator of class I heat shock genes (grpE-dnaK-dnaJ and groELS operons). Prevents heat-shock induction of these operons. In Staphylococcus haemolyticus (strain JCSC1435), this protein is Heat-inducible transcription repressor HrcA.